Reading from the N-terminus, the 60-residue chain is Arabinogalactan protein 14 (60 aa).

Residues Met1–Ala28 form the signal peptide. 4-hydroxyproline occurs at positions 32, 34, and 36. O-linked (Ara...) hydroxyproline glycosylation is found at Pro32, Pro34, and Pro36. Ser38 carries GPI-anchor amidated serine lipidation. Positions Asp39–Phe60 are cleaved as a propeptide — removed in mature form.

The protein belongs to the AG-peptide AGP family. In terms of processing, contains 4-hydroxyproline; hydroxylated on Pro-32, Pro-34 and Pro-36. O-glycosylated on hydroxyprolines; noncontiguous hydroxylproline residues are glycosylated with arabinogalactan.

It is found in the cell membrane. Proteoglycan that seems to be implicated in diverse developmental roles such as differentiation, cell-cell recognition, embryogenesis and programmed cell death. Involved in the regulation of root hair elongation. This is Arabinogalactan protein 14 from Arabidopsis thaliana (Mouse-ear cress).